The primary structure comprises 132 residues: DNA-directed RNA polymerase subunit omega (132 aa).

Residues 89 to 109 (HSSESESIFNTSSQEEGTSFD) form a disordered region. The span at 96–105 (IFNTSSQEEG) shows a compositional bias: polar residues.

The protein belongs to the RNA polymerase subunit omega family. The RNAP catalytic core consists of 2 alpha, 1 beta, 1 beta' and 1 omega subunit. When a sigma factor is associated with the core the holoenzyme is formed, which can initiate transcription.

The enzyme catalyses RNA(n) + a ribonucleoside 5'-triphosphate = RNA(n+1) + diphosphate. Its function is as follows. Promotes RNA polymerase assembly. Latches the N- and C-terminal regions of the beta' subunit thereby facilitating its interaction with the beta and alpha subunits. This Bartonella tribocorum (strain CIP 105476 / IBS 506) protein is DNA-directed RNA polymerase subunit omega.